We begin with the raw amino-acid sequence, 81 residues long: CLAVATA3/ESR (CLE)-related protein 5 (81 aa).

Residues 1 to 26 (MATLILKQTLIILLIIFSLQTLSSQA) form the signal peptide. A hydroxyproline mark is found at Pro73 and Pro76. O-linked (Ara...) hydroxyproline glycosylation occurs at Pro76.

It belongs to the CLV3/ESR signal peptide family. Post-translationally, the O-glycosylation (arabinosylation) of the hydroxyproline Pro-76 enhances binding affinity of the CLE5p peptide for its receptor. Mostly expressed in roots, and, to a lower extent, in seedlings, stems, apex, flowers and siliques.

It is found in the secreted. Its subcellular location is the extracellular space. Extracellular signal peptide that regulates cell fate. This chain is CLAVATA3/ESR (CLE)-related protein 5, found in Arabidopsis thaliana (Mouse-ear cress).